Reading from the N-terminus, the 164-residue chain is Ribosomal RNA large subunit methyltransferase H (164 aa).

Gly-109 lines the S-adenosyl-L-methionine pocket.

It belongs to the RNA methyltransferase RlmH family. As to quaternary structure, homodimer.

It is found in the cytoplasm. The catalysed reaction is pseudouridine(1915) in 23S rRNA + S-adenosyl-L-methionine = N(3)-methylpseudouridine(1915) in 23S rRNA + S-adenosyl-L-homocysteine + H(+). Specifically methylates the pseudouridine at position 1915 (m3Psi1915) in 23S rRNA. The sequence is that of Ribosomal RNA large subunit methyltransferase H from Methylobacterium radiotolerans (strain ATCC 27329 / DSM 1819 / JCM 2831 / NBRC 15690 / NCIMB 10815 / 0-1).